The primary structure comprises 76 residues: Putative phosphotransferase enzyme IIA component YyzE (76 aa).

The region spanning 1–76 (MVTPTKHAIG…LHQKIFTVVS (76 aa)) is the PTS EIIA type-1 domain. The active-site Tele-phosphohistidine intermediate is the H22.

The protein localises to the cytoplasm. Functionally, the phosphoenolpyruvate-dependent sugar phosphotransferase system (PTS), a major carbohydrate active -transport system, catalyzes the phosphorylation of incoming sugar substrates concomitant with their translocation across the cell membrane. The polypeptide is Putative phosphotransferase enzyme IIA component YyzE (yyzE) (Bacillus subtilis (strain 168)).